We begin with the raw amino-acid sequence, 92 residues long: Protein S100-B (92 aa).

Position 2 is an N-acetylserine (Ser2). 2 EF-hand domains span residues 13 to 48 (DVFHQYSGREGDKHKLKKSELKELINNELSHFLEEI) and 49 to 84 (KEQEVVDKVMETLDEDGDGECDFQEFMAFVSMVTTA). Zn(2+) is bound at residue His16. Ca(2+)-binding residues include Ser19 and Glu22. His26 is a binding site for Zn(2+). Ca(2+) is bound by residues Lys27, Glu32, Asp62, Asp64, Asp66, Glu68, and Glu73. Residues His86 and His91 each contribute to the Zn(2+) site.

It belongs to the S-100 family. As to quaternary structure, dimer of either two alpha chains, or two beta chains, or one alpha and one beta chain. The S100B dimer binds two molecules of STK38. Interacts with CACYBP in a calcium-dependent manner. Interacts with ATAD3A; this interaction probably occurs in the cytosol prior to ATAD3A mitochondrial targeting. Interacts with S100A6. The S100B dimer interacts with two molecules of CAPZA1. Interacts with AGER. Interacts with PPP5C (via TPR repeats); the interaction is calcium-dependent and modulates PPP5C activity. Interacts with TPPP; this interaction inhibits TPPP dimerization. Interacts with isoform CLSTN3beta of CLSTN3; interaction promotes secretion. Although predominant among the water-soluble brain proteins, S100 is also found in a variety of other tissues.

It localises to the cytoplasm. It is found in the nucleus. Its subcellular location is the secreted. In terms of biological role, small zinc- and- and calcium-binding protein that is highly expressed in astrocytes and constitutes one of the most abundant soluble proteins in brain. Weakly binds calcium but binds zinc very tightly-distinct binding sites with different affinities exist for both ions on each monomer. Physiological concentrations of potassium ion antagonize the binding of both divalent cations, especially affecting high-affinity calcium-binding sites. Acts as a neurotrophic factor that promotes astrocytosis and axonal proliferation. Involved in innervation of thermogenic adipose tissue by acting as an adipocyte-derived neurotrophic factor that promotes sympathetic innervation of adipose tissue. Binds to and initiates the activation of STK38 by releasing autoinhibitory intramolecular interactions within the kinase. Interaction with AGER after myocardial infarction may play a role in myocyte apoptosis by activating ERK1/2 and p53/TP53 signaling. Could assist ATAD3A cytoplasmic processing, preventing aggregation and favoring mitochondrial localization. May mediate calcium-dependent regulation on many physiological processes by interacting with other proteins, such as TPR-containing proteins, and modulating their activity. The polypeptide is Protein S100-B (Rattus norvegicus (Rat)).